We begin with the raw amino-acid sequence, 274 residues long: Dermonecrotic toxin SdSicTox-betaIIB1bvii (274 aa).

Histidine 5 is an active-site residue. Residues glutamate 25 and aspartate 27 each contribute to the Mg(2+) site. The active-site Nucleophile is histidine 41. Cystine bridges form between cysteine 45–cysteine 51 and cysteine 47–cysteine 190. Mg(2+) is bound at residue aspartate 85.

This sequence belongs to the arthropod phospholipase D family. Class II subfamily. Mg(2+) is required as a cofactor. In terms of tissue distribution, expressed by the venom gland.

It localises to the secreted. The enzyme catalyses an N-(acyl)-sphingosylphosphocholine = an N-(acyl)-sphingosyl-1,3-cyclic phosphate + choline. It carries out the reaction an N-(acyl)-sphingosylphosphoethanolamine = an N-(acyl)-sphingosyl-1,3-cyclic phosphate + ethanolamine. The catalysed reaction is a 1-acyl-sn-glycero-3-phosphocholine = a 1-acyl-sn-glycero-2,3-cyclic phosphate + choline. It catalyses the reaction a 1-acyl-sn-glycero-3-phosphoethanolamine = a 1-acyl-sn-glycero-2,3-cyclic phosphate + ethanolamine. Dermonecrotic toxins cleave the phosphodiester linkage between the phosphate and headgroup of certain phospholipids (sphingolipid and lysolipid substrates), forming an alcohol (often choline) and a cyclic phosphate. This toxin acts on sphingomyelin (SM). It may also act on ceramide phosphoethanolamine (CPE), lysophosphatidylcholine (LPC) and lysophosphatidylethanolamine (LPE), but not on lysophosphatidylserine (LPS), and lysophosphatidylglycerol (LPG). It acts by transphosphatidylation, releasing exclusively cyclic phosphate products as second products. Induces dermonecrosis, hemolysis, increased vascular permeability, edema, inflammatory response, and platelet aggregation. This chain is Dermonecrotic toxin SdSicTox-betaIIB1bvii, found in Sicarius cf. damarensis (strain GJB-2008) (Six-eyed sand spider).